Reading from the N-terminus, the 618-residue chain is tRNA endonuclease vms-1 (618 aa).

A C2H2-type zinc finger spans residues 59 to 85 (DQCTTCNCPVDFGDRAVLLEHYQSLFH). A VLRF1 domain is found at 170 to 311 (RPFDCAIFLW…SDCWQRLQQV (142 aa)). Residue Q213 is part of the active site. 2 ANK repeats span residues 437–466 (NRSTFLHVSAANDARKCLKYFLEEVNCDSS) and 470–496 (GAGLPPYSSSANSDVKSIFIDYRVKNE). The tract at residues 502-539 (ARTHIPEPKKKVELTEEQEREQAERKKEKKARQKEKEK) is disordered. Basic and acidic residues predominate over residues 505 to 515 (HIPEPKKKVEL). Positions 510–557 (KKKVELTEEQEREQAERKKEKKARQKEKEKLKKEIAKRDVEEMEERQK) form a coiled coil.

Belongs to the ANKZF1/VMS1 family. In terms of tissue distribution, in larval stages and in adults, expressed in intestinal cells, specific neurons in the head and the tail, and in the ventral nerve cord.

The protein localises to the cytoplasm. It localises to the mitochondrion. Endonuclease that cleaves polypeptidyl-tRNAs downstream of the ribosome-associated quality control (RQC) pathway to release incompletely synthesized polypeptides for degradation. The RQC pathway disassembles aberrantly stalled translation complexes to recycle or degrade the constituent parts. Dispensable for viability and growth but is required for protection against oxidative stress and for wild-type life span. The sequence is that of tRNA endonuclease vms-1 (vms-1) from Caenorhabditis elegans.